Consider the following 354-residue polypeptide: Thymidylate synthase (354 aa).

The segment at 1-32 (MPAAGSEPSRPPSPPGVQEQSAEPRPPPPPHG) is disordered. Arginine 53 contacts dUMP. A Phosphoserine modification is found at serine 117. 178-179 (RR) is a dUMP binding site. Cysteine 198 acts as the Nucleophile in catalysis. DUMP-binding positions include 218–221 (RSGD), asparagine 229, and 259–261 (HIY). (6R)-5,10-methylene-5,6,7,8-tetrahydrofolate is bound at residue aspartate 221. Lysine 349 participates in a covalent cross-link: Glycyl lysine isopeptide (Lys-Gly) (interchain with G-Cter in SUMO2). Position 353 (alanine 353) interacts with (6R)-5,10-methylene-5,6,7,8-tetrahydrofolate.

The protein belongs to the thymidylate synthase family. As to quaternary structure, homodimer.

It localises to the nucleus. The protein resides in the cytoplasm. It is found in the mitochondrion. Its subcellular location is the mitochondrion matrix. The protein localises to the mitochondrion inner membrane. The catalysed reaction is dUMP + (6R)-5,10-methylene-5,6,7,8-tetrahydrofolate = 7,8-dihydrofolate + dTMP. Its pathway is pyrimidine metabolism; dTTP biosynthesis. Functionally, catalyzes the reductive methylation of 2'-deoxyuridine 5'-monophosphate (dUMP) to thymidine 5'-monophosphate (dTMP), using the cosubstrate, 5,10- methylenetetrahydrofolate (CH2H4folate) as a 1-carbon donor and reductant and contributes to the de novo mitochondrial thymidylate biosynthesis pathway. The sequence is that of Thymidylate synthase (TYMS) from Bos taurus (Bovine).